A 240-amino-acid chain; its full sequence is Ribonuclease P protein component 3 (240 aa).

This sequence belongs to the eukaryotic/archaeal RNase P protein component 3 family. Consists of a catalytic RNA component and at least 4-5 protein subunits.

Its subcellular location is the cytoplasm. The enzyme catalyses Endonucleolytic cleavage of RNA, removing 5'-extranucleotides from tRNA precursor.. In terms of biological role, part of ribonuclease P, a protein complex that generates mature tRNA molecules by cleaving their 5'-ends. This chain is Ribonuclease P protein component 3, found in Halorubrum lacusprofundi (strain ATCC 49239 / DSM 5036 / JCM 8891 / ACAM 34).